Consider the following 156-residue polypeptide: Small ribosomal subunit protein uS7 (156 aa).

This sequence belongs to the universal ribosomal protein uS7 family. As to quaternary structure, part of the 30S ribosomal subunit. Contacts proteins S9 and S11.

In terms of biological role, one of the primary rRNA binding proteins, it binds directly to 16S rRNA where it nucleates assembly of the head domain of the 30S subunit. Is located at the subunit interface close to the decoding center, probably blocks exit of the E-site tRNA. The chain is Small ribosomal subunit protein uS7 from Laribacter hongkongensis (strain HLHK9).